A 678-amino-acid chain; its full sequence is RNA helicase NPH-II (678 aa).

The 177-residue stretch at 175 to 351 (FTSWARRVPV…EFFAESVFVH (177 aa)) folds into the Helicase ATP-binding domain. Position 188–195 (188–195 (GDTGVGKT)) interacts with ATP. Positions 300 to 303 (DEVH) match the DEXH box motif. In terms of domain architecture, Helicase C-terminal spans 371-546 (PLNRFMYIEE…VFDLQLPEDL (176 aa)).

This sequence belongs to the DEAD box helicase family. DEAH subfamily. In terms of assembly, monomer.

Its subcellular location is the virion. It catalyses the reaction ATP + H2O = ADP + phosphate + H(+). NTP-dependent helicase that catalyzes unidirectional unwinding of 3'tailed duplex RNAs and plays an important role during transcription of early mRNAs, presumably by preventing R-loop formation behind the elongating RNA polymerase. Might also play a role in the export of newly synthesized mRNA chains out of the core into the cytoplasm. Required for replication and propagation of viral particles. The polypeptide is RNA helicase NPH-II (OPG084) (Oryctolagus cuniculus (Rabbit)).